The chain runs to 445 residues: Baccatin III:3-amino-3-phenylpropanoyltransferase (445 aa).

The protein belongs to the plant acyltransferase family.

The enzyme catalyses (3R)-3-amino-3-phenylpropanoyl-CoA + baccatin III = 3'-N-debenzoyl-2'-deoxytaxol + CoA. Its pathway is alkaloid biosynthesis; taxol biosynthesis. In terms of biological role, acyltransferase involved in taxol biosynthesis. Catalyzes the selective 13-O-acylation of baccatin III with (3R)-3-amino-3-phenylpropanoyl-CoA as the acyl donor to form 3'-N-debenzoyl-2'-deoxytaxol. This is Baccatin III:3-amino-3-phenylpropanoyltransferase from Taxus cuspidata (Japanese yew).